Consider the following 673-residue polypeptide: Ion-translocating oxidoreductase complex subunit C (673 aa).

2 consecutive 4Fe-4S ferredoxin-type domains span residues 368-397 (MGAP…QQLY) and 407-436 (KATA…VQYF). Positions 377, 380, 383, 387, 416, 419, 422, and 426 each coordinate [4Fe-4S] cluster. 2 disordered regions span residues 534–553 (QARA…SGGA) and 563–653 (IARA…AAVA).

This sequence belongs to the 4Fe4S bacterial-type ferredoxin family. RnfC subfamily. As to quaternary structure, the complex is composed of six subunits: RsxA, RsxB, RsxC, RsxD, RsxE and RsxG. [4Fe-4S] cluster is required as a cofactor.

It is found in the cell inner membrane. Its function is as follows. Part of a membrane-bound complex that couples electron transfer with translocation of ions across the membrane. Required to maintain the reduced state of SoxR. This chain is Ion-translocating oxidoreductase complex subunit C, found in Salmonella gallinarum (strain 287/91 / NCTC 13346).